The following is a 382-amino-acid chain: LIM homeobox transcription factor 1-alpha (382 aa).

2 consecutive LIM zinc-binding domains span residues 33 to 92 (SVCE…LFAV) and 92 to 154 (VKCG…EREL). Disordered stretches follow at residues 161-208 (AASD…QQRR) and 252-286 (KLAR…MEGI). A DNA-binding region (homeobox) is located at residues 195 to 254 (PKRPRTILTTQQRRAFKASFEVSSKPCRKVRETLAAETGLSVRVVQVWFQNQRAKMKKLA). Low complexity predominate over residues 256-269 (RQQQQQQDQQNTQR).

Its subcellular location is the nucleus. Acts as a transcriptional activator by binding to an A/T-rich sequence, the FLAT element, in the insulin gene promoter. Required for development of the roof plate and, in turn, for specification of dorsal cell fates in the CNS and developing vertebrae. The polypeptide is LIM homeobox transcription factor 1-alpha (Lmx1a) (Mus musculus (Mouse)).